The primary structure comprises 277 residues: Probable redox regulatory protein ML2435 (277 aa).

The protein belongs to the Rv0495c family.

Essential for maintaining intracellular redox homeostasis. In Mycobacterium leprae (strain TN), this protein is Probable redox regulatory protein ML2435.